Reading from the N-terminus, the 262-residue chain is MTRIHPTAIVEPGAQIDESVEIGPYAIVGPHVTIGARTTIGSHSVIEGHTTLGEDNRIGHYASVGGRPQDMKYKDEPTKLVIGNRNTIREFTTIHTGTVQDVGVTTLGDDNWIMAYVHIGHDCRVGNNVILSSNAQMAGHVEIGDFAIIGGMSGVHQFVRIGAHSMLGGASALVQDIPPFVIAAGNKAEPHGINVEGLRRRGFSADAISALRSAYRVLYKNGLSLEEAKVQLRELAEAGGDGDAPVTALVEFIDASQRGIIR.

It belongs to the transferase hexapeptide repeat family. LpxA subfamily. As to quaternary structure, homotrimer.

Its subcellular location is the cytoplasm. The catalysed reaction is a (3R)-hydroxyacyl-[ACP] + UDP-N-acetyl-alpha-D-glucosamine = a UDP-3-O-[(3R)-3-hydroxyacyl]-N-acetyl-alpha-D-glucosamine + holo-[ACP]. It participates in glycolipid biosynthesis; lipid IV(A) biosynthesis; lipid IV(A) from (3R)-3-hydroxytetradecanoyl-[acyl-carrier-protein] and UDP-N-acetyl-alpha-D-glucosamine: step 1/6. Involved in the biosynthesis of lipid A, a phosphorylated glycolipid that anchors the lipopolysaccharide to the outer membrane of the cell. This Burkholderia orbicola (strain MC0-3) protein is Acyl-[acyl-carrier-protein]--UDP-N-acetylglucosamine O-acyltransferase.